The following is a 429-amino-acid chain: MSELKDCPPLKYYDFKPVDHVKVCPRYTAVLSRSEDDGIGIEELDTLQLELETLLSSASRRLRALEEQRQILTDWQDKKGDKRFLKLEKDPDLAASSRHSKPKKQKLDVKGSHGPGPGPGRPKSKNIQTKVQDFEFEVDPQDIPRNPKNDAPNRFWASVEPYCADITNEEIRVLEELLKAPDDEAEYYKIPTLGKHYSQRWAQEDLLEERREGARANDKKKSMMGPLSELDAKDVDALLKKSESQHEPPEDGCPFGPLSQRLLQALVEENIISPMEDSPIPDIPGKDDGAGTSPRSQGKAFSVPHTRSLEARIREELVSQGLLDSDERQGVGGESEDEVLAELQKRQAELKALTAHNRSRKLELLKLAREEMRKQELRQRVRVADNEVMEAFRRIMAARQKKRTPTKKEKDQAWKALKERESILKLLDG.

Positions 41–70 (IEELDTLQLELETLLSSASRRLRALEEQRQ) form a coiled coil. 3 disordered regions span residues 86–132 (KLEK…TKVQ), 208–257 (EERR…PFGP), and 274–308 (PMED…HTRS). Composition is skewed to basic and acidic residues over residues 208–221 (EERR…DKKK) and 230–249 (LDAK…HEPP). A coiled-coil region spans residues 364 to 404 (LLKLAREEMRKQELRQRVRVADNEVMEAFRRIMAARQKKRT).

Belongs to the NGG1 family.

The protein resides in the nucleus. In terms of biological role, functions as a component of the PCAF complex. The PCAF complex is capable of efficiently acetylating histones in a nucleosomal context. This Danio rerio (Zebrafish) protein is Transcriptional adapter 3 (tada3).